The primary structure comprises 230 residues: MKQFWSPSSINKNKAMVENLQNHGIVTSDEVAKAMEAVDRGVFVTDRSSAYVDSPMSIGYNVTISAPHMHAMCLQLLEKHLKPGMRVLDVGSGTGYLTACFAVMVGTEGRAIGVEHIPELVASSVKNIEASAASPFLKEGSLAVHVGDGRQGWAEFAPYDAIHVGAAAPEIPEALIDQLKPGGRLVIPVGNIFQDLQVVDKNSDGSVSIKDETSVRYVPLTSREAQLRGD.

The active site involves S65.

This sequence belongs to the methyltransferase superfamily. L-isoaspartyl/D-aspartyl protein methyltransferase family. As to quaternary structure, monomer. Expressed in roots, rosette leaves, stems, cauline leaves, flowers and developing seeds.

It is found in the cytoplasm. It carries out the reaction [protein]-L-isoaspartate + S-adenosyl-L-methionine = [protein]-L-isoaspartate alpha-methyl ester + S-adenosyl-L-homocysteine. Its function is as follows. Catalyzes the methyl esterification of L-isoaspartyl residues in peptides and proteins that result from spontaneous decomposition of normal L-aspartyl and L-asparaginyl residues. It plays a role in the repair and/or degradation of damaged proteins. Contributes to seed longevity and germination vigor by limiting the abnormal accumulation of the L-isoaspartyl residues in seed proteins. This chain is Protein-L-isoaspartate O-methyltransferase 1 (PIMT1), found in Arabidopsis thaliana (Mouse-ear cress).